The sequence spans 620 residues: Chaperone protein HscA homolog (620 aa).

The protein belongs to the heat shock protein 70 family.

Functionally, chaperone involved in the maturation of iron-sulfur cluster-containing proteins. Has a low intrinsic ATPase activity which is markedly stimulated by HscB. In Pseudomonas entomophila (strain L48), this protein is Chaperone protein HscA homolog.